A 565-amino-acid polypeptide reads, in one-letter code: Formate--tetrahydrofolate ligase (565 aa).

ATP is bound at residue 73–80 (TPAGEGKS).

Belongs to the formate--tetrahydrofolate ligase family.

The catalysed reaction is (6S)-5,6,7,8-tetrahydrofolate + formate + ATP = (6R)-10-formyltetrahydrofolate + ADP + phosphate. Its pathway is one-carbon metabolism; tetrahydrofolate interconversion. The polypeptide is Formate--tetrahydrofolate ligase (Arthrobacter sp. (strain FB24)).